We begin with the raw amino-acid sequence, 333 residues long: MQTEQLLLKIIEQTHLTSSEMQQLFTSIIQGELNPIQLTALLITLKIRGESAEEISGAVAACLNAAQPFPTPDYAFADIVGTGGDSANTINISTASAIVGAACGLKIAKHGNRSVSSKTGSSDLLTALGVNINMPADIARRALDEIGLCFLFAQQYHLGFKHAVPVRQALKTRTIFNILGPLINPARPKRQLLGVYSPHLLKPYAETVAQLGHQHTFVVHGCGLDEVAIHGRTDVAEIYDGKITYYSLSPLDFGFQAKPLESLRGGEPAENAQMITALLQGQGKPEHAQAVAMNTALLMKLFGYENIKHNAQQVLDVIQSGKSVNVLSQLTRY.

5-phospho-alpha-D-ribose 1-diphosphate contacts are provided by residues Gly-81, 84–85 (GD), Thr-89, 91–94 (NIST), 109–117 (KHGNRSVSS), and Ser-121. Residue Gly-81 participates in anthranilate binding. A Mg(2+)-binding site is contributed by Ser-93. Asn-112 serves as a coordination point for anthranilate. Arg-167 is a binding site for anthranilate. Positions 225 and 226 each coordinate Mg(2+).

It belongs to the anthranilate phosphoribosyltransferase family. In terms of assembly, homodimer. Requires Mg(2+) as cofactor.

The enzyme catalyses N-(5-phospho-beta-D-ribosyl)anthranilate + diphosphate = 5-phospho-alpha-D-ribose 1-diphosphate + anthranilate. The protein operates within amino-acid biosynthesis; L-tryptophan biosynthesis; L-tryptophan from chorismate: step 2/5. Catalyzes the transfer of the phosphoribosyl group of 5-phosphorylribose-1-pyrophosphate (PRPP) to anthranilate to yield N-(5'-phosphoribosyl)-anthranilate (PRA). In Glaesserella parasuis serovar 5 (strain SH0165) (Haemophilus parasuis), this protein is Anthranilate phosphoribosyltransferase.